The primary structure comprises 803 residues: Zinc finger X-linked protein ZXDB (803 aa).

3 disordered regions span residues 1–91, 120–140, and 218–260; these read MEIP…GGDD, EAEEGPGLQGGESGANPAGPT, and AAHP…GPRG. Residues 13-26 show a composition bias toward gly residues; it reads LQGGGGGGIPAGGG. C2H2-type zinc fingers lie at residues 271 to 295, 304 to 328, 334 to 358, 364 to 386, 393 to 417, 424 to 448, 454 to 478, 484 to 508, 514 to 538, and 547 to 572; these read YLCPEAQCGQTFAKKHQLKVHLLTH, FKCPLGGCGWTFTTSYKLKRHLQSH, FGCPAEGCGKSFTTVYNLKAHMKGH, FKCEVCEESFPTQAKLSAHQRSH, YQCAFSGCKKTFITVSALFSHNRAH, FSCSFPGCSKQYDKACRLKIHLRSH, FLCDFDGCGWNFTSMSKLLRHKRKH, FMCPVEGCGKSFTRAEHLKGHSITH, FVCPVAGCCARFSARSSLYIHSKKH, and SRCPISSCNKLFTSKHSMKTHMVKRH. Residues 271–577 form a required for interaction with ZXDC region; the sequence is YLCPEAQCGQ…MVKRHKVGQD (307 aa). Positions 576-703 are required for transcriptional activation; it reads QDLLAQLEAA…NMDEVSSVSV (128 aa).

This sequence belongs to the ZXD family. In terms of assembly, self-associates. Interacts with ZXDC and CIITA. May be expressed in brain, heart, kidney, liver, lung, muscle and placenta.

The protein localises to the nucleus. Its function is as follows. Cooperates with CIITA to promote transcription of MHC class I and MHC class II genes. The polypeptide is Zinc finger X-linked protein ZXDB (ZXDB) (Homo sapiens (Human)).